We begin with the raw amino-acid sequence, 573 residues long: Lauric acid 10-hydroxylase (573 aa).

2 helical membrane-spanning segments follow: residues 3 to 23 and 298 to 318; these read YVNI…LMSL and LFPT…LLIF. Cysteine 516 serves as a coordination point for heme.

Belongs to the cytochrome P450 family. Heme is required as a cofactor. Mostly expressed in flowers and leaves and, at low levels, in roots and stems.

Its subcellular location is the endoplasmic reticulum membrane. The catalysed reaction is an omega-methyl-medium-chain fatty acid + reduced [NADPH--hemoprotein reductase] + O2 = an omega-hydroxy-medium-chain fatty acid + oxidized [NADPH--hemoprotein reductase] + H2O + H(+). It catalyses the reaction decanoate + reduced [NADPH--hemoprotein reductase] + O2 = 10-hydroxydecanoate + oxidized [NADPH--hemoprotein reductase] + H2O + H(+). It carries out the reaction dodecanoate + reduced [NADPH--hemoprotein reductase] + O2 = 12-hydroxydodecanoate + oxidized [NADPH--hemoprotein reductase] + H2O + H(+). The protein operates within lipid metabolism; fatty acid metabolism. Its function is as follows. Cytochrome P450 hydroxylase catalyzing the conversion of decanoate (capric acid) and dodecanoate (lauric acid) to their corresponding omega-hydroxy metabolites, 10-hydroxydecanoate and 12-hydroxydodecanoate, respectively; these hydroxylated components affect plant growth, including reducing root elongation. The chain is Lauric acid 10-hydroxylase from Petunia hybrida (Petunia).